Reading from the N-terminus, the 162-residue chain is Large ribosomal subunit protein uL22c (162 aa).

Belongs to the universal ribosomal protein uL22 family. In terms of assembly, part of the 50S ribosomal subunit.

It localises to the plastid. The protein localises to the chloroplast. This protein binds specifically to 23S rRNA. Its function is as follows. The globular domain of the protein is located near the polypeptide exit tunnel on the outside of the subunit, while an extended beta-hairpin is found that lines the wall of the exit tunnel in the center of the 70S ribosome. The chain is Large ribosomal subunit protein uL22c (rpl22) from Cucumis sativus (Cucumber).